A 255-amino-acid polypeptide reads, in one-letter code: Protein N-terminal and lysine N-methyltransferase efm7 (255 aa).

Positions 1-25 (MADNDFEGFGIFEEPEGFRPSTPPP) are disordered. S-adenosyl-L-methionine contacts are provided by residues Trp58, 84–86 (GAG), Asp106, Trp137, and Ser162.

The protein belongs to the class I-like SAM-binding methyltransferase superfamily. EFM7 family.

The protein resides in the cytoplasm. Its function is as follows. S-adenosyl-L-methionine-dependent protein methyltransferase that trimethylates the N-terminal glycine 'Gly-2' of elongation factor 1-alpha, before also catalyzing the mono- and dimethylation of 'Lys-3'. The protein is Protein N-terminal and lysine N-methyltransferase efm7 of Schizosaccharomyces pombe (strain 972 / ATCC 24843) (Fission yeast).